The following is a 126-amino-acid chain: Fluoride-specific ion channel FluC 1 (126 aa).

4 consecutive transmembrane segments (helical) span residues M1–L21, W38–Y58, L67–V87, and F99–G119. G77 and S80 together coordinate Na(+).

It belongs to the fluoride channel Fluc/FEX (TC 1.A.43) family.

It localises to the cell inner membrane. It catalyses the reaction fluoride(in) = fluoride(out). Na(+) is not transported, but it plays an essential structural role and its presence is essential for fluoride channel function. Fluoride-specific ion channel. Important for reducing fluoride concentration in the cell, thus reducing its toxicity. This Synechococcus sp. (strain CC9902) protein is Fluoride-specific ion channel FluC 1.